Reading from the N-terminus, the 294-residue chain is MTASAKRLLLVHAHPDDETITTGGTIARYASEGADVTVLTCTLGEEGEVIGDAWAGLVAAEADQLGGYRIAELSAALSALGSAAPRFLAGAGRYRDSGMIGTPSAANPRAFVNARLDEAVSAVVAVIREIRPHVVITYDPNGGYGHPDHIQAHAITTAAVEAAATAAYPEAGEPWSTPKFYWTVTERSGLERGIAAISEFPENWRLPEPGELPSVEDSDVTTAIDVRGVINAKARALSAHATQVTVAPSGAEFALSNNVVQPILTVEHFVLAAGTLGPVGEDGRERDLFGGLHS.

Zn(2+) contacts are provided by histidine 14, aspartate 17, and histidine 149.

The protein belongs to the MshB deacetylase family. Zn(2+) serves as cofactor.

The catalysed reaction is 1D-myo-inositol 2-acetamido-2-deoxy-alpha-D-glucopyranoside + H2O = 1D-myo-inositol 2-amino-2-deoxy-alpha-D-glucopyranoside + acetate. In terms of biological role, catalyzes the deacetylation of 1D-myo-inositol 2-acetamido-2-deoxy-alpha-D-glucopyranoside (GlcNAc-Ins) in the mycothiol biosynthesis pathway. This Rhodococcus erythropolis (strain PR4 / NBRC 100887) protein is 1D-myo-inositol 2-acetamido-2-deoxy-alpha-D-glucopyranoside deacetylase.